The following is a 103-amino-acid chain: uncharacterized protein (103 aa).

The N-terminal stretch at 1–21 (MTGFKVSSFFYILALSRFFNA) is a signal peptide.

This is an uncharacterized protein from Saccharomyces cerevisiae (strain ATCC 204508 / S288c) (Baker's yeast).